Consider the following 126-residue polypeptide: Small ribosomal subunit protein uS13 (126 aa).

The tract at residues 93–126 is disordered; the sequence is RRGLPVRGQRTKTNARTRKGPKRTVAGKKKAGRK.

The protein belongs to the universal ribosomal protein uS13 family. As to quaternary structure, part of the 30S ribosomal subunit. Forms a loose heterodimer with protein S19. Forms two bridges to the 50S subunit in the 70S ribosome.

Its function is as follows. Located at the top of the head of the 30S subunit, it contacts several helices of the 16S rRNA. In the 70S ribosome it contacts the 23S rRNA (bridge B1a) and protein L5 of the 50S subunit (bridge B1b), connecting the 2 subunits; these bridges are implicated in subunit movement. Contacts the tRNAs in the A and P-sites. This chain is Small ribosomal subunit protein uS13, found in Beutenbergia cavernae (strain ATCC BAA-8 / DSM 12333 / CCUG 43141 / JCM 11478 / NBRC 16432 / NCIMB 13614 / HKI 0122).